We begin with the raw amino-acid sequence, 254 residues long: Phosphoribosylaminoimidazole-succinocarboxamide synthase (254 aa).

Belongs to the SAICAR synthetase family.

It catalyses the reaction 5-amino-1-(5-phospho-D-ribosyl)imidazole-4-carboxylate + L-aspartate + ATP = (2S)-2-[5-amino-1-(5-phospho-beta-D-ribosyl)imidazole-4-carboxamido]succinate + ADP + phosphate + 2 H(+). It participates in purine metabolism; IMP biosynthesis via de novo pathway; 5-amino-1-(5-phospho-D-ribosyl)imidazole-4-carboxamide from 5-amino-1-(5-phospho-D-ribosyl)imidazole-4-carboxylate: step 1/2. This is Phosphoribosylaminoimidazole-succinocarboxamide synthase from Gluconacetobacter diazotrophicus (strain ATCC 49037 / DSM 5601 / CCUG 37298 / CIP 103539 / LMG 7603 / PAl5).